We begin with the raw amino-acid sequence, 161 residues long: Nucleotide-binding protein Bd0338 (161 aa).

Belongs to the YajQ family.

Nucleotide-binding protein. The protein is Nucleotide-binding protein Bd0338 of Bdellovibrio bacteriovorus (strain ATCC 15356 / DSM 50701 / NCIMB 9529 / HD100).